The sequence spans 376 residues: Histidinol-phosphate aminotransferase 1 (376 aa).

An N6-(pyridoxal phosphate)lysine modification is found at lysine 235.

Belongs to the class-II pyridoxal-phosphate-dependent aminotransferase family. Histidinol-phosphate aminotransferase subfamily. In terms of assembly, homodimer. Requires pyridoxal 5'-phosphate as cofactor.

The enzyme catalyses L-histidinol phosphate + 2-oxoglutarate = 3-(imidazol-4-yl)-2-oxopropyl phosphate + L-glutamate. The protein operates within amino-acid biosynthesis; L-histidine biosynthesis; L-histidine from 5-phospho-alpha-D-ribose 1-diphosphate: step 7/9. The protein is Histidinol-phosphate aminotransferase 1 of Cupriavidus pinatubonensis (strain JMP 134 / LMG 1197) (Cupriavidus necator (strain JMP 134)).